Consider the following 121-residue polypeptide: uncharacterized protein (121 aa).

This sequence to M.jannaschii MJ0017 and MJ1466.

This is an uncharacterized protein from Aquifex aeolicus (strain VF5).